Reading from the N-terminus, the 320-residue chain is Tyrosine recombinase XerC (320 aa).

The region spanning 14–104 (ADVREAVASW…SLRSFARHLE (91 aa)) is the Core-binding (CB) domain. A Tyr recombinase domain is found at 125–311 (RLPRPLPVAA…DSARLMSAFE (187 aa)). Catalysis depends on residues R170, K195, H263, R266, and H289. The active-site O-(3'-phospho-DNA)-tyrosine intermediate is the Y298.

It belongs to the 'phage' integrase family. XerC subfamily. As to quaternary structure, forms a cyclic heterotetrameric complex composed of two molecules of XerC and two molecules of XerD.

The protein localises to the cytoplasm. In terms of biological role, site-specific tyrosine recombinase, which acts by catalyzing the cutting and rejoining of the recombining DNA molecules. The XerC-XerD complex is essential to convert dimers of the bacterial chromosome into monomers to permit their segregation at cell division. It also contributes to the segregational stability of plasmids. The sequence is that of Tyrosine recombinase XerC from Methylobacterium sp. (strain 4-46).